The chain runs to 81 residues: Putative membrane protein insertion efficiency factor (81 aa).

The interval 59-81 (PWNPGGYDPVPPIKTSRSSSMAE) is disordered.

The protein belongs to the UPF0161 family.

Its subcellular location is the cell inner membrane. Functionally, could be involved in insertion of integral membrane proteins into the membrane. This is Putative membrane protein insertion efficiency factor from Azotobacter vinelandii (strain DJ / ATCC BAA-1303).